The chain runs to 545 residues: Chaperonin GroEL 2 (545 aa).

Residues 29 to 32 (TLGP), 86 to 90 (DGTTT), glycine 413, 479 to 481 (NAA), and aspartate 495 each bind ATP.

It belongs to the chaperonin (HSP60) family. In terms of assembly, forms a cylinder of 14 subunits composed of two heptameric rings stacked back-to-back. Interacts with the co-chaperonin GroES.

It is found in the cytoplasm. It carries out the reaction ATP + H2O + a folded polypeptide = ADP + phosphate + an unfolded polypeptide.. Together with its co-chaperonin GroES, plays an essential role in assisting protein folding. The GroEL-GroES system forms a nano-cage that allows encapsulation of the non-native substrate proteins and provides a physical environment optimized to promote and accelerate protein folding. In Prochlorococcus marinus (strain MIT 9215), this protein is Chaperonin GroEL 2.